Here is a 358-residue protein sequence, read N- to C-terminus: DnaJ homolog subfamily B member 11 (358 aa).

Positions 1–22 (MAPQNLGTLCLLLLYLLGAAIA) are cleaved as a signal peptide. In terms of domain architecture, J spans 25–90 (DFYKILGVPR…EKRKQYDTYG (66 aa)). The residue at position 188 (T188) is a Phosphothreonine. N-linked (GlcNAc...) asparagine glycosylation is present at N261.

Part of a large chaperone multiprotein complex comprising DNAJB11, HSP90B1, HSPA5, HYOU, PDIA2, PDIA4, PDIA6, PPIB, SDF2L1, UGGT1 and very small amounts of ERP29, but not, or at very low levels, CALR nor CANX. Binds to denatured substrates in an ATP-independent manner. Interacts via the J domain with HSPA5 in an ATP-dependent manner. In terms of processing, contains high-mannose Endo H-sensitive carbohydrates. Post-translationally, cys-169, Cys-171, Cys-193 and Cys-196 form intramolecular disulfide bonds. The preferential partner for each Cys is not known. In terms of tissue distribution, pancreas.

The protein resides in the endoplasmic reticulum lumen. As a co-chaperone for HSPA5 it is required for proper folding, trafficking or degradation of proteins. Binds directly to both unfolded proteins that are substrates for ERAD and nascent unfolded peptide chains, but dissociates from the HSPA5-unfolded protein complex before folding is completed. May help recruiting HSPA5 and other chaperones to the substrate. Stimulates HSPA5 ATPase activity. It is necessary for maturation and correct trafficking of PKD1. This is DnaJ homolog subfamily B member 11 (DNAJB11) from Canis lupus familiaris (Dog).